The sequence spans 435 residues: Mitochondrial association factor 1 form a1 (435 aa).

A signal peptide spans 1 to 20 (MWRIWRCRLSFLFATGCLLG). At 21-96 (ALTAGLGSQM…VTARRRRNRR (76 aa)) the chain is on the vacuolar side. A helical transmembrane segment spans residues 97-117 (IALIATAVGVAVILAALYVLR). Over 118–435 (RRRAQPPQEP…ERTYTFPQGD (318 aa)) the chain is Cytoplasmic. The segment at 120–159 (RAQPPQEPEPPTRLRTPRPRAPSGQQQPSESEPPAGVPMT) is disordered.

Interacts with host SAMM50.

Its subcellular location is the parasitophorous vacuole membrane. During host cell infection by tachyzoites, does not play a role in tethering the parasitophorous vacuole to the host mitochondria, probably because it does not bind host mitochondrial import protein TOMM70. This chain is Mitochondrial association factor 1 form a1, found in Toxoplasma gondii (strain ATCC 50611 / Me49).